We begin with the raw amino-acid sequence, 489 residues long: Mitochondrial-processing peptidase subunit beta (489 aa).

A mitochondrion-targeting transit peptide spans 1-45 (MAAAALSRTLLPEARRRLWGFTRRLPLRRAAAQPLYFGGDRLRST). His-101 contacts Zn(2+). Catalysis depends on Glu-104, which acts as the Proton acceptor. Zn(2+) is bound by residues His-105 and Glu-181.

Belongs to the peptidase M16 family. Heterodimer of PMPCA (alpha) and PMPCB (beta) subunits, forming the mitochondrial processing protease (MPP) in which PMPCA is involved in substrate recognition and binding and PMPCB is the catalytic subunit. Zn(2+) serves as cofactor.

It localises to the mitochondrion matrix. The catalysed reaction is Release of N-terminal transit peptides from precursor proteins imported into the mitochondrion, typically with Arg in position P2.. With respect to regulation, binding to PMPCA is required for catalytic activity. In terms of biological role, catalytic subunit of the essential mitochondrial processing protease (MPP), which cleaves the mitochondrial sequence off newly imported precursors proteins. Preferentially, cleaves after an arginine at position P2. Required for PINK1 turnover by coupling PINK1 mitochondrial import and cleavage, which results in subsequent PINK1 proteolysis. In Mus musculus (Mouse), this protein is Mitochondrial-processing peptidase subunit beta (Pmpcb).